We begin with the raw amino-acid sequence, 178 residues long: UPF0228 protein MM_0401 (178 aa).

It belongs to the UPF0228 family.

The chain is UPF0228 protein MM_0401 from Methanosarcina mazei (strain ATCC BAA-159 / DSM 3647 / Goe1 / Go1 / JCM 11833 / OCM 88) (Methanosarcina frisia).